We begin with the raw amino-acid sequence, 176 residues long: Lipoprotein signal peptidase (176 aa).

A run of 3 helical transmembrane segments spans residues 12–32 (WYWMVVLVFIADQLSKQWVLA), 67–87 (WQRWFFTFVAVGFSTLLTIWL), and 94–116 (MWRLNLAYTLVIGGALGNLIDRL). Catalysis depends on residues aspartate 123 and aspartate 141. Residues 137 to 157 (FNIADSAICVGAALIIIDSII) traverse the membrane as a helical segment.

This sequence belongs to the peptidase A8 family.

It is found in the cell inner membrane. It catalyses the reaction Release of signal peptides from bacterial membrane prolipoproteins. Hydrolyzes -Xaa-Yaa-Zaa-|-(S,diacylglyceryl)Cys-, in which Xaa is hydrophobic (preferably Leu), and Yaa (Ala or Ser) and Zaa (Gly or Ala) have small, neutral side chains.. The protein operates within protein modification; lipoprotein biosynthesis (signal peptide cleavage). Functionally, this protein specifically catalyzes the removal of signal peptides from prolipoproteins. The polypeptide is Lipoprotein signal peptidase (Shewanella woodyi (strain ATCC 51908 / MS32)).